The sequence spans 112 residues: MDLMPLEKARAIEIAFDNVFHNTKIPDNLQQFDAILKRLERRRFIPTENQKPRVYETELLVLRFREFGVKDNHNHPINLHSLRSKSLIRAQGKKLDLHNRVFLRRNVRAVKM.

In terms of assembly, component of the CENP-A recruiting complex composed of at least mis16, mis19, mis19 and mis20.

It localises to the chromosome. It is found in the centromere. The protein resides in the kinetochore. Component of the CENP-A recruiting complex that ensures the integrity of mitotic spindles through maintenance of kinetochore factors mis6/CENP-I and cnp1/CENP-A. Links mis16 and mis18 to recruit CENP-A through interacting with non-sense-mediated mRNA decay (NMD) factors and the SWI/SNF complex. Also links mis18 with the CCAN/mis6/ctf19 complex to promote CENP-A assembly. In Schizosaccharomyces pombe (strain 972 / ATCC 24843) (Fission yeast), this protein is CENP-A recruiting complex protein mis19.